Consider the following 418-residue polypeptide: cAMP-dependent protein kinase type II-beta regulatory subunit (418 aa).

The segment at 2 to 153 (SIEIPAGLTE…RLQEACKDIL (152 aa)) is dimerization and phosphorylation. A compositionally biased stretch (basic and acidic residues) spans 48 to 57 (TARFGHEGRT). Residues 48 to 96 (TARFGHEGRTWGDLGAAAGGGTPSKGVNFAEEPMQSDSEDGEEEEAAPA) are disordered. T69 bears the Phosphothreonine mark. S83, S85, and S114 each carry phosphoserine. The span at 84–94 (DSEDGEEEEAA) shows a compositional bias: acidic residues. 3',5'-cyclic AMP contacts are provided by residues 154-275 (LFKN…ESLP), E223, R232, 276-418 (FLKS…EPTA), E352, and R361.

The protein belongs to the cAMP-dependent kinase regulatory chain family. As to quaternary structure, the inactive form of the enzyme is composed of two regulatory chains and two catalytic chains. Activation by cAMP produces two active catalytic monomers and a regulatory dimer that binds four cAMP molecules. Interacts with PRKACA and PRKACB. Interacts with the phosphorylated form of PJA2. Forms a complex composed of PRKAR2B, GSK3B and GSKIP through GSKIP interaction; facilitates PKA-induced phosphorylation and regulates GSK3B activity. In terms of processing, phosphorylated by the activated catalytic chain. Four types of regulatory chains are found: I-alpha, I-beta, II-alpha, and II-beta. Their expression varies among tissues and is in some cases constitutive and in others inducible.

The protein localises to the cytoplasm. The protein resides in the cell membrane. Regulatory subunit of the cAMP-dependent protein kinases involved in cAMP signaling in cells. Type II regulatory chains mediate membrane association by binding to anchoring proteins, including the MAP2 kinase. This is cAMP-dependent protein kinase type II-beta regulatory subunit (PRKAR2B) from Homo sapiens (Human).